Reading from the N-terminus, the 277-residue chain is Uridine-cytidine kinase 1 (277 aa).

Residue 24-32 participates in ATP binding; that stretch reads GGTASGKST. Substrate-binding residues include aspartate 81, tyrosine 109, histidine 114, arginine 163, arginine 172, and glutamine 180. Residue aspartate 209 coordinates ATP. The segment at 241 to 277 is disordered; sequence NHGRSLKRGVAEHGENPSGSSSNLTKRPLLEPSTRPH.

Belongs to the uridine kinase family.

It carries out the reaction uridine + ATP = UMP + ADP + H(+). It catalyses the reaction cytidine + ATP = CMP + ADP + H(+). The protein operates within pyrimidine metabolism; CTP biosynthesis via salvage pathway; CTP from cytidine: step 1/3. It participates in pyrimidine metabolism; UMP biosynthesis via salvage pathway; UMP from uridine: step 1/1. Functionally, phosphorylates uridine and cytidine to uridine monophosphate and cytidine monophosphate. Does not phosphorylate deoxyribonucleosides or purine ribonucleosides. Can use ATP or GTP as a phosphate donor. This chain is Uridine-cytidine kinase 1 (uck1), found in Danio rerio (Zebrafish).